We begin with the raw amino-acid sequence, 124 residues long: MELLQPSADAAPVPLPAFLDFTPNAAAKVAALIDAEGNPQLKLRLYVSGGGCSGFQYGFAFDDQVADDDLQVVTDGVTLLIDAMSRQYLAGARVDYEDGLEGSRFVIQNPNAQSTCGCGSSFSV.

Iron-sulfur cluster is bound by residues Cys52, Cys116, and Cys118.

It belongs to the HesB/IscA family. In terms of assembly, homodimer. The cofactor is iron-sulfur cluster.

Functionally, required for insertion of 4Fe-4S clusters. The polypeptide is Putative iron-sulfur cluster insertion protein ErpA 2 (Burkholderia vietnamiensis (strain G4 / LMG 22486) (Burkholderia cepacia (strain R1808))).